We begin with the raw amino-acid sequence, 245 residues long: 5'-nucleotidase SurE (245 aa).

A divalent metal cation is bound by residues Asp8, Asp9, Ser39, and Asn91.

It belongs to the SurE nucleotidase family. A divalent metal cation serves as cofactor.

The protein localises to the cytoplasm. It catalyses the reaction a ribonucleoside 5'-phosphate + H2O = a ribonucleoside + phosphate. Its function is as follows. Nucleotidase that shows phosphatase activity on nucleoside 5'-monophosphates. The chain is 5'-nucleotidase SurE from Psychromonas ingrahamii (strain DSM 17664 / CCUG 51855 / 37).